We begin with the raw amino-acid sequence, 252 residues long: 5-oxoprolinase subunit A (252 aa).

Belongs to the LamB/PxpA family. Forms a complex composed of PxpA, PxpB and PxpC.

The enzyme catalyses 5-oxo-L-proline + ATP + 2 H2O = L-glutamate + ADP + phosphate + H(+). Functionally, catalyzes the cleavage of 5-oxoproline to form L-glutamate coupled to the hydrolysis of ATP to ADP and inorganic phosphate. This chain is 5-oxoprolinase subunit A, found in Bacillus cytotoxicus (strain DSM 22905 / CIP 110041 / 391-98 / NVH 391-98).